The sequence spans 103 residues: uncharacterized protein (103 aa).

In terms of domain architecture, CHCH spans F10–Q63. 2 consecutive short sequence motifs (cx9C motif) follow at residues C13–C23 and C45–C55. 2 cysteine pairs are disulfide-bonded: C13–C55 and C23–C45. Over residues T80–N90 the composition is skewed to basic and acidic residues. Residues T80–S103 form a disordered region. The segment covering N91–S103 has biased composition (polar residues).

This sequence belongs to the TRIAP1/MDM35 family.

This is an uncharacterized protein from Caenorhabditis elegans.